Reading from the N-terminus, the 637-residue chain is Sodium-dependent proline transporter (637 aa).

At 1–45 the chain is on the cytoplasmic side; the sequence is MKKLQEAHLRKPVTPDLLMTPSDQGDVDLDVDFAADRGNWTGKLD. The residue at position 20 (T20) is a Phosphothreonine. At S22 the chain carries Phosphoserine. A run of 3 helical transmembrane segments spans residues 46-66, 74-93, and 117-137; these read FLLS…FPYR, AFLV…LFFL, and GAGA…NMII. Topologically, residues 138 to 214 are extracellular; that stretch reads AYVLFYLFAS…QGIGRPGEIR (77 aa). N-linked (GlcNAc...) asparagine glycosylation is present at N182. 9 consecutive transmembrane segments (helical) span residues 215-233, 242-259, 295-312, 324-345, 378-397, 425-443, 459-479, 500-519, and 538-556; these read WNLC…LCIL, VVYF…MLLV, IFYS…FASY, FIVT…FSVL, LPLS…TLGL, VFSG…ILTT, SFGL…VYGI, ACWL…YSIV, and LGIL…GMLV. Topologically, residues 557–637 are cytoplasmic; that stretch reads AVLREEGSLW…IAEEEEESMM (81 aa). 2 positions are modified to phosphoserine: S573 and S582. Position 588 is a phosphothreonine (T588). At Y591 the chain carries Phosphotyrosine. 2 positions are modified to phosphoserine: S598 and S600.

Belongs to the sodium:neurotransmitter symporter (SNF) (TC 2.A.22) family. SLC6A7 subfamily. In terms of tissue distribution, expressed in subpopulations of putative glutamatergic pathways of rat brain.

The protein resides in the synaptic cell membrane. The catalysed reaction is L-proline(out) + chloride(out) + 2 Na(+)(out) = L-proline(in) + chloride(in) + 2 Na(+)(in). It carries out the reaction L-pipecolate(out) + chloride(out) + 2 Na(+)(out) = L-pipecolate(in) + chloride(in) + 2 Na(+)(in). Brain specific sodium (and chloride)-dependent proline transporter. Terminates the action of proline by its high affinity sodium-dependent reuptake into presynaptic terminals. The polypeptide is Sodium-dependent proline transporter (Slc6a7) (Rattus norvegicus (Rat)).